A 400-amino-acid polypeptide reads, in one-letter code: Elongation factor Tu (400 aa).

One can recognise a tr-type G domain in the interval 10–209 (KPHVNIGTIG…AVDKYIPTPQ (200 aa)). The tract at residues 19–26 (GHVDHGKT) is G1. 19–26 (GHVDHGKT) provides a ligand contact to GTP. Position 26 (T26) interacts with Mg(2+). The tract at residues 60–64 (GITIN) is G2. The tract at residues 81 to 84 (DCPG) is G3. GTP is bound by residues 81 to 85 (DCPGH) and 136 to 139 (NKVD). The segment at 136-139 (NKVD) is G4. The segment at 174 to 176 (SAL) is G5.

Belongs to the TRAFAC class translation factor GTPase superfamily. Classic translation factor GTPase family. EF-Tu/EF-1A subfamily. In terms of assembly, monomer.

It localises to the cytoplasm. The catalysed reaction is GTP + H2O = GDP + phosphate + H(+). GTP hydrolase that promotes the GTP-dependent binding of aminoacyl-tRNA to the A-site of ribosomes during protein biosynthesis. This Caldicellulosiruptor bescii (strain ATCC BAA-1888 / DSM 6725 / KCTC 15123 / Z-1320) (Anaerocellum thermophilum) protein is Elongation factor Tu.